An 80-amino-acid polypeptide reads, in one-letter code: Regulatory protein HrpD6 (80 aa).

Its function is as follows. Involved in the regulation of several genes of the hrp-hrc-hpa cluster, which encodes a type III secretion system (T3SS). Upregulates the expression of hpa2, hpa1 and hpaB and partially controls the expression of hrcC and hrcT. Controls the secretion of the T3SS TAL effector AvrXa27. Also regulates the expression of several HrpX-regulated protein (Xrp) genes. Has no influence on hrpG or hrpX expression. The sequence is that of Regulatory protein HrpD6 from Xanthomonas oryzae pv. oryzicola.